The primary structure comprises 194 residues: Peptidyl-tRNA hydrolase (194 aa).

Tyr-17 lines the tRNA pocket. His-22 functions as the Proton acceptor in the catalytic mechanism. Residues Tyr-68, Asn-70, and Asn-116 each coordinate tRNA.

It belongs to the PTH family. As to quaternary structure, monomer.

The protein resides in the cytoplasm. It carries out the reaction an N-acyl-L-alpha-aminoacyl-tRNA + H2O = an N-acyl-L-amino acid + a tRNA + H(+). Functionally, hydrolyzes ribosome-free peptidyl-tRNAs (with 1 or more amino acids incorporated), which drop off the ribosome during protein synthesis, or as a result of ribosome stalling. Its function is as follows. Catalyzes the release of premature peptidyl moieties from peptidyl-tRNA molecules trapped in stalled 50S ribosomal subunits, and thus maintains levels of free tRNAs and 50S ribosomes. This is Peptidyl-tRNA hydrolase from Pseudomonas entomophila (strain L48).